We begin with the raw amino-acid sequence, 200 residues long: Large ribosomal subunit protein uL4 (200 aa).

Residues 43–71 form a disordered region; that stretch reads RAQKTRAEVSGSGKKPWRQKGTGRARSGD.

Belongs to the universal ribosomal protein uL4 family. Part of the 50S ribosomal subunit.

In terms of biological role, one of the primary rRNA binding proteins, this protein initially binds near the 5'-end of the 23S rRNA. It is important during the early stages of 50S assembly. It makes multiple contacts with different domains of the 23S rRNA in the assembled 50S subunit and ribosome. Forms part of the polypeptide exit tunnel. This is Large ribosomal subunit protein uL4 from Histophilus somni (strain 129Pt) (Haemophilus somnus).